Consider the following 822-residue polypeptide: BDNF/NT-3 growth factors receptor (822 aa).

The signal sequence occupies residues 1-31 (MSSWIRWHGPAMARLWGFCWLVVGFWRAAFA). 2 disulfide bridges follow: cysteine 32–cysteine 38 and cysteine 36–cysteine 45. The LRRNT domain occupies 32–61 (CPTSCKCSASRIWCSDPSPGIVAFPRLEPN). Over 32 to 430 (CPTSCKCSAS…DVTDKTGREH (399 aa)) the chain is Extracellular. Asparagine 67, asparagine 95, and asparagine 121 each carry an N-linked (GlcNAc...) asparagine glycan. LRR repeat units follow at residues 92–113 (GLRNLTIVDSGLKFVAHKAFLK) and 116–137 (NLQHINFTRNKLTSLSRKHFRH). Residues 148–196 (NPFTCSCDIMWIKTLQEAKSSPDTQDLYCLNESSKNIPLANLQIPNCGL) form the LRRCT domain. Intrachain disulfides connect cysteine 152–cysteine 176 and cysteine 154–cysteine 194. N-linked (GlcNAc...) asparagine glycosylation is found at asparagine 178, asparagine 205, asparagine 241, asparagine 254, asparagine 280, asparagine 325, asparagine 338, and asparagine 412. 2 Ig-like C2-type domains span residues 197–282 (PSAN…VNLT) and 295–365 (PTSD…IAKN). Cysteine 218 and cysteine 266 are disulfide-bonded. An intrachain disulfide couples cysteine 302 to cysteine 345. The helical transmembrane segment at 431-454 (LSVYAVVVIASVVGFCLLVMLFLL) threads the bilayer. Residues 455-466 (KLARHSKFGMKG) form an interaction with MAPK8IP3/JIP3 region. Topologically, residues 455 to 822 (KLARHSKFGM…ASPVYLDILG (368 aa)) are cytoplasmic. A disordered region spans residues 475 to 498 (DDSASPLHHISNGSNTPSSSEGGP). Polar residues predominate over residues 485-495 (SNGSNTPSSSE). At tyrosine 516 the chain carries Phosphotyrosine; by autocatalysis. The 270-residue stretch at 538–807 (IVLKRELGEG…KNIKGIHTLL (270 aa)) folds into the Protein kinase domain. ATP is bound by residues 544–552 (LGEGAFGKV) and lysine 572. Aspartate 676 serves as the catalytic Proton acceptor. A phosphotyrosine; by autocatalysis mark is found at tyrosine 702, tyrosine 706, tyrosine 707, and tyrosine 817.

This sequence belongs to the protein kinase superfamily. Tyr protein kinase family. Insulin receptor subfamily. As to quaternary structure, exists in a dynamic equilibrium between monomeric (low affinity) and dimeric (high affinity) structures. Interacts (phosphorylated upon activation by BDNF) with SHC1; mediates SHC1 phosphorylation and activation. Interacts (phosphorylated upon activation by BDNF) with PLCG1 and/or PLCG2; mediates PLCG1 phosphorylation and activation. Interacts with SH2B1 and SH2B2. Interacts with NGFR; may regulate the ligand specificity of the receptor. Interacts with SORCS2; this interaction is important for normal targeting to post-synaptic densities in response to high-frequency stimulation. Interacts (phosphorylated upon ligand-binding) with SH2D1A; regulates NTRK2. Interacts with SQSTM1 and KIDINS220. Interacts (phosphorylated upon ligand-binding) with FRS2; activates the MAPK signaling pathway. Interacts with APPL1. Interacts with MAPK8IP3/JIP3 and KLC1; interaction with KLC1 is mediated by MAPK8IP3/JIP3. Interacts with SORL1; this interaction facilitates NTRK2 trafficking between synaptic plasma membranes, postsynaptic densities and cell soma, hence positively regulates BDNF signaling. Interacts with SLITRK2. Post-translationally, phosphorylated. Undergoes ligand-mediated autophosphorylation that is required for interaction with SHC1 and PLCG1 and other downstream effectors. Isoform TrkB-T-Shc is not phosphorylated. In terms of processing, ubiquitinated. Undergoes polyubiquitination upon activation; regulated by NGFR. Ubiquitination regulates the internalization of the receptor. Isoform TrkB is expressed in the central and peripheral nervous system. In the central nervous system (CNS), expression is observed in the cerebral cortex, hippocampus, thalamus, choroid plexus, granular layer of the cerebellum, brain stem, and spinal cord. In the peripheral nervous system, it is expressed in many cranial ganglia, the ophthalmic nerve, the vestibular system, multiple facial structures, the submaxillary glands, and dorsal root ganglia. Isoform TrkB-T1 is mainly expressed in the brain but also detected in other tissues including pancreas, kidney and heart. Isoform TrkB-T-Shc is predominantly expressed in the brain.

It is found in the cell membrane. Its subcellular location is the endosome membrane. The protein resides in the early endosome membrane. The protein localises to the cell projection. It localises to the axon. It is found in the dendrite. Its subcellular location is the cytoplasm. The protein resides in the perinuclear region. The protein localises to the postsynaptic density. It catalyses the reaction L-tyrosyl-[protein] + ATP = O-phospho-L-tyrosyl-[protein] + ADP + H(+). Its activity is regulated as follows. The neuronal activity and the influx of calcium positively regulate the kinase activity and the internalization of the receptor which are both important for active signaling. Regulated by NGFR that may control the internalization of the receptor. NGFR may also stimulate the activation by BDNF compared to NTF3 and NTF4. SH2D1A inhibits the autophosphorylation of the receptor, and alters the recruitment and activation of downstream effectors and signaling cascades. The formation of active receptors dimers able to fully transduce the ligand-mediated signal, may be negatively regulated by the formation of inactive heterodimers with the non-catalytic isoforms. Functionally, receptor tyrosine kinase involved in the development and the maturation of the central and the peripheral nervous systems through regulation of neuron survival, proliferation, migration, differentiation, and synapse formation and plasticity. Receptor for BDNF/brain-derived neurotrophic factor and NTF4/neurotrophin-4. Alternatively can also bind NTF3/neurotrophin-3 which is less efficient in activating the receptor but regulates neuron survival through NTRK2. Upon ligand-binding, undergoes homodimerization, autophosphorylation and activation. Recruits, phosphorylates and/or activates several downstream effectors including SHC1, FRS2, SH2B1, SH2B2 and PLCG1 that regulate distinct overlapping signaling cascades. Through SHC1, FRS2, SH2B1, SH2B2 activates the GRB2-Ras-MAPK cascade that regulates for instance neuronal differentiation including neurite outgrowth. Through the same effectors controls the Ras-PI3 kinase-AKT1 signaling cascade that mainly regulates growth and survival. Through PLCG1 and the downstream protein kinase C-regulated pathways controls synaptic plasticity. Thereby, plays a role in learning and memory by regulating both short term synaptic function and long-term potentiation. PLCG1 also leads to NF-Kappa-B activation and the transcription of genes involved in cell survival. Hence, it is able to suppress anoikis, the apoptosis resulting from loss of cell-matrix interactions. May also play a role in neutrophin-dependent calcium signaling in glial cells and mediate communication between neurons and glia. This chain is BDNF/NT-3 growth factors receptor (NTRK2), found in Homo sapiens (Human).